Reading from the N-terminus, the 222-residue chain is Probable glutathione-independent glyoxalase hsp3104 (222 aa).

Residues C124, H125, and E155 contribute to the active site.

This sequence belongs to the peptidase C56 family. HSP31-like subfamily.

It localises to the cytoplasm. It catalyses the reaction methylglyoxal + H2O = (R)-lactate + H(+). Catalyzes the conversion of methylglyoxal (MG) to D-lactate in a single glutathione (GSH)-independent step. May play a role in detoxifying endogenously produced glyoxals. Involved in protection against reactive oxygen species (ROS). In Schizosaccharomyces pombe (strain 972 / ATCC 24843) (Fission yeast), this protein is Probable glutathione-independent glyoxalase hsp3104.